Reading from the N-terminus, the 23-residue chain is Cysteine proteinase (23 aa).

The span at 1 to 10 (ADSLDWREKG) shows a compositional bias: basic and acidic residues. The disordered stretch occupies residues 1-23 (ADSLDWREKGVVNSIKDQAQXGS).

This sequence belongs to the peptidase C1 family.

This Tritrichomonas foetus (Trichomonas foetus) protein is Cysteine proteinase.